Consider the following 190-residue polypeptide: MKKLFLIIGAPGSGKTTDAEIIAKNNPDSINHYSTGELLRAEVASGSERGKIIEGFTSKGNLVPLEIVVETIVSAIKNAPKNVVLIDGYPRSTEQMEALDKILKEESDVELTNVIEVEVSEQVACDRVLGRARGADDNAEVFRNRMSVYLAPLKPIQAFYTAKGILHKINGERTIEEIVSEMEGFIKSRL.

12 to 17 (GSGKTT) provides a ligand contact to ATP. The interval 34 to 63 (STGELLRAEVASGSERGKIIEGFTSKGNLV) is NMP. AMP-binding positions include threonine 35, arginine 40, 61-63 (NLV), 88-91 (GYPR), and glutamine 95. The segment at 130–136 (GRARGAD) is LID. Arginine 131 is a binding site for ATP. Arginine 133 and arginine 145 together coordinate AMP. An ATP-binding site is contributed by arginine 173.

Belongs to the adenylate kinase family. As to quaternary structure, monomer.

The protein resides in the cytoplasm. The enzyme catalyses AMP + ATP = 2 ADP. Its pathway is purine metabolism; AMP biosynthesis via salvage pathway; AMP from ADP: step 1/1. In terms of biological role, catalyzes the reversible transfer of the terminal phosphate group between ATP and AMP. Plays an important role in cellular energy homeostasis and in adenine nucleotide metabolism. In Wolinella succinogenes (strain ATCC 29543 / DSM 1740 / CCUG 13145 / JCM 31913 / LMG 7466 / NCTC 11488 / FDC 602W) (Vibrio succinogenes), this protein is Adenylate kinase.